An 82-amino-acid polypeptide reads, in one-letter code: Chaperone protein DnaJ 1 (82 aa).

The tract at residues 1-33 (YHLGGPPVTLKLPPGTPAGRTMRARGKGAVRKD) is disordered.

The protein belongs to the DnaJ family. In terms of assembly, homodimer. It depends on Zn(2+) as a cofactor.

Its subcellular location is the cytoplasm. Its function is as follows. Participates actively in the response to hyperosmotic and heat shock by preventing the aggregation of stress-denatured proteins and by disaggregating proteins, also in an autonomous, DnaK-independent fashion. Unfolded proteins bind initially to DnaJ; upon interaction with the DnaJ-bound protein, DnaK hydrolyzes its bound ATP, resulting in the formation of a stable complex. GrpE releases ADP from DnaK; ATP binding to DnaK triggers the release of the substrate protein, thus completing the reaction cycle. Several rounds of ATP-dependent interactions between DnaJ, DnaK and GrpE are required for fully efficient folding. Also involved, together with DnaK and GrpE, in the DNA replication of plasmids through activation of initiation proteins. The polypeptide is Chaperone protein DnaJ 1 (dnaJ1) (Streptomyces albus G).